The following is a 49-amino-acid chain: MNPKALCSFLLATFLLLTVTIMPSVHANAEANADAIIGPCPKKPIGIVC.

Residues 1–27 (MNPKALCSFLLATFLLLTVTIMPSVHA) form the signal peptide. Residues 28-35 (NAEANADA) constitute a propeptide that is removed on maturation.

In terms of processing, contains 1 disulfide bond. Expressed by the venom gland.

It localises to the secreted. In Manica rubida (European giant red ant), this protein is U6-myrmicitoxin-Mri1a.